The sequence spans 976 residues: Receptor-like protein 14 (976 aa).

Positions 1–26 (MERKVFSGQNLIWVMLLLVQLRGYKC) are cleaved as a signal peptide. The Extracellular segment spans residues 27-928 (CIEKERKALL…DDDDEAAIDM (902 aa)). N60, N75, N98, N112, N151, N185, and N200 each carry an N-linked (GlcNAc...) asparagine glycan. LRR repeat units follow at residues 105 to 127 (FEEL…LFDD), 137 to 160 (LRNL…FLNA), 162 to 185 (TSLT…ELKN), 186 to 209 (LTKL…FTHL), 210 to 233 (EKLK…ELKV), 234 to 258 (LTNL…VFCE), 260 to 283 (KNLR…LGNL), 284 to 306 (NKLR…SFNS), 308 to 331 (ESLE…PLAN), 333 to 358 (TKLK…WLPK), 359 to 381 (FQLT…LVYQ), 382 to 405 (TNLR…LLEN), 407 to 428 (PELK…PTIV), 429 to 452 (HKLQ…IGHV), 454 to 477 (PRLL…MGEM), 478 to 501 (NDIS…LLTG), and 503 to 528 (FSLI…RLTS). N-linked (GlcNAc...) asparagine glycosylation occurs at N331. N416 carries an N-linked (GlcNAc...) asparagine glycan. N460 and N489 each carry an N-linked (GlcNAc...) asparagine glycan. An LRR 18; degenerate repeat occupies 530–549 (IVLRMHNNLFTGEIGVGLRT). 11 LRR repeats span residues 550-573 (LVNL…SIPP), 575-599 (SSHL…LLAI), 600-623 (HHLN…VVNS), 625-645 (YGIK…VTLL), 646-669 (ENAY…VNTG), 671-692 (MITL…LCDL), 693-715 (TSIR…CLNH), 782-805 (LDYM…ELGD), 806-829 (LSKL…NFSK), 831-854 (KDIE…LTNL), and 856-879 (SLAV…QFNT). The N-linked (GlcNAc...) asparagine glycan is linked to N552. N-linked (GlcNAc...) asparagine glycosylation is present at N633. N-linked (GlcNAc...) asparagine glycosylation occurs at N680. N-linked (GlcNAc...) asparagine glycosylation is found at N813, N826, N853, N861, and N866. A disordered region spans residues 897–922 (DRSCEGKKNTKEADNGGEEEEEDDDD). Over residues 898 to 910 (RSCEGKKNTKEAD) the composition is skewed to basic and acidic residues. A compositionally biased stretch (acidic residues) spans 911-922 (NGGEEEEEDDDD). The chain crosses the membrane as a helical span at residues 929-949 (VVLYWTTGSTYAIALIGILVL). Over 950–976 (MCFDCPWRRTWLCIVDAFIASGKSMFS) the chain is Cytoplasmic.

This sequence belongs to the RLP family.

The protein resides in the cell membrane. The protein is Receptor-like protein 14 of Arabidopsis thaliana (Mouse-ear cress).